The sequence spans 173 residues: MTQSEPTEQKRAGRPFPVSWDQFHRDCRALSWRLNELGPFHAVIAITRGGLVPAAIVARELGLRVIDTVCIASYEHDKQGELQVLKGVSDQTATLGGGTGKGLLIIDDLVDTGKTGRMVRSMLPDAHFAAVYAKPKGRPLVDTFITEVSQDTWIFFPWDTGLSFQPPLKDGAG.

5-phospho-alpha-D-ribose 1-diphosphate-binding positions include 48-49 and 107-115; these read RG and DDLVDTGKT. Asp-108 provides a ligand contact to Mg(2+). Guanine contacts are provided by Asp-111 and Ile-154. The xanthine site is built by Asp-111 and Ile-154. GMP-binding positions include 111–115 and 153–154; these read DTGKT and WI.

It belongs to the purine/pyrimidine phosphoribosyltransferase family. XGPT subfamily. In terms of assembly, homotetramer. Mg(2+) is required as a cofactor.

Its subcellular location is the cell inner membrane. It catalyses the reaction GMP + diphosphate = guanine + 5-phospho-alpha-D-ribose 1-diphosphate. The catalysed reaction is XMP + diphosphate = xanthine + 5-phospho-alpha-D-ribose 1-diphosphate. The enzyme catalyses IMP + diphosphate = hypoxanthine + 5-phospho-alpha-D-ribose 1-diphosphate. Its pathway is purine metabolism; GMP biosynthesis via salvage pathway; GMP from guanine: step 1/1. The protein operates within purine metabolism; XMP biosynthesis via salvage pathway; XMP from xanthine: step 1/1. Functionally, purine salvage pathway enzyme that catalyzes the transfer of the ribosyl-5-phosphate group from 5-phospho-alpha-D-ribose 1-diphosphate (PRPP) to the N9 position of the 6-oxopurines guanine and xanthine to form the corresponding ribonucleotides GMP (guanosine 5'-monophosphate) and XMP (xanthosine 5'-monophosphate), with the release of PPi. To a lesser extent, also acts on hypoxanthine. This is Xanthine-guanine phosphoribosyltransferase from Rhodopseudomonas palustris (strain ATCC BAA-98 / CGA009).